A 524-amino-acid polypeptide reads, in one-letter code: Cytochrome P450 monooxygenase patH (524 aa).

Residues 1–4 (MEPM) lie on the Cytoplasmic side of the membrane. The helical transmembrane segment at 5–23 (LLLILVAAVVLLFVRWAFV) threads the bilayer. Residues 24 to 524 (YGHRTSNMPK…KEVFSQFTEG (501 aa)) lie on the Lumenal side of the membrane. N191 carries N-linked (GlcNAc...) asparagine glycosylation. Position 442 (C442) interacts with heme. The N-linked (GlcNAc...) asparagine glycan is linked to N499.

This sequence belongs to the cytochrome P450 family. The cofactor is heme.

The protein localises to the endoplasmic reticulum membrane. It carries out the reaction 3-methylphenol + reduced [NADPH--hemoprotein reductase] + O2 = 3-hydroxybenzyl alcohol + oxidized [NADPH--hemoprotein reductase] + H2O + H(+). Its pathway is mycotoxin biosynthesis; patulin biosynthesis. Functionally, cytochrome P450 monooxygenase; part of the gene cluster that mediates the biosynthesis of patulin, an acetate-derived tetraketide mycotoxin produced by several fungal species that shows antimicrobial properties against several bacteria. PatH catalyzes the conversion of m-cresol into m-hydroxybenzyl alcohol. The pathway begins with the synthesis of 6-methylsalicylic acid by the polyketide synthase (PKS) patK via condensation of acetate and malonate units. The 6-methylsalicylic acid decarboxylase patG then catalyzes the decarboxylation of 6-methylsalicylic acid to yield m-cresol (also known as 3-methylphenol). These first reactions occur in the cytosol. The intermediate m-cresol is then transported into the endoplasmic reticulum where the cytochrome P450 monooxygenase patH converts it to m-hydroxybenzyl alcohol, which is further converted to gentisyl alcohol by the cytochrome P450 monooxygenase patI. The oxidoreductases patJ and patO further convert gentisyl alcohol to isoepoxydon in the vacuole. PatN catalyzes then the transformation of isoepoxydon into phyllostine. The cluster protein patF is responsible for the conversion from phyllostine to neopatulin whereas the alcohol dehydrogenase patD converts neopatulin to E-ascladiol. The steps between isoepoxydon and E-ascladiol occur in the cytosol, and E-ascladiol is probably secreted to the extracellular space by one of the cluster-specific transporters patC or patM. Finally, the secreted patulin synthase patE catalyzes the conversion of E-ascladiol to patulin. In Aspergillus clavatus (strain ATCC 1007 / CBS 513.65 / DSM 816 / NCTC 3887 / NRRL 1 / QM 1276 / 107), this protein is Cytochrome P450 monooxygenase patH.